The chain runs to 681 residues: CAI-1 autoinducer sensor kinase/phosphatase CqsS (681 aa).

Helical transmembrane passes span 17–37 (LVGWMGFIGFPIYYIVWEFMF), 73–93 (AYYQVVTTLCLPCFFFYMLLM), 112–132 (ILLVHITSVMFVQTFVGIGLA), and 148–168 (MDWTHVPIFLFIYLFGNLFYF). A Histidine kinase domain is found at 187-413 (GIAHEMRNPL…QFTMTFPTIG (227 aa)). His-190 is subject to Phosphohistidine; by autocatalysis. Residues 564-681 (TIMVVDDNES…RLFDKIANWI (118 aa)) enclose the Response regulatory domain. Asp-613 is subject to 4-aspartylphosphate.

The protein localises to the cell membrane. The enzyme catalyses ATP + protein L-histidine = ADP + protein N-phospho-L-histidine.. Its function is as follows. Senses the quorum-sensing autoinducer CAI-1 ((S)-3-hydroxytridecan-4-one) which probably functions as an intragenus signal. The sensory signal is then relayed to LuxU and LuxO. The protein is CAI-1 autoinducer sensor kinase/phosphatase CqsS (cqsS) of Vibrio campbellii (strain ATCC BAA-1116).